Reading from the N-terminus, the 498-residue chain is MAVMKIKGAATVAGTWLNEAVSFVVFCILDIVDSFLCLLYKAADYLFEAEWKPCYCLSDKEPITTTRGKILLSHNNGESKILTLSPLQELGGRSKIELEDISETLYTRPSLISDISTISVNELNKRFVKVTRSESECSGHNEKTKNKRRRSLTKSSLTVNFTVVEMLRGKIRPQNLNHDISRWSDCDCGFCTSWASTSDKNHSLFVKTQIPNGVTAKEDVLFIHGFISSSAFWTETVFPSLSASSSTHRLFAVDLLGFGKSPKPADSLYTLREHVEMIEKSVLHKYNVKSFHIVAHSLGCILALSLAARHGGLIKSLTLLAPPYYPVPKGEKKPRQYVMKKVAPRKVWPPIALGASMACWYEHISRTICLLICKHHRVWQFIAGVLTRNNRTVNFLIEGFMCHTHNAAWHTLHNIICGTGSKLDTYLDIVRDKLKCNVTIFHGGDDELIPVECSYNVKQRIPRARVKVIEHKDHITMVVGRQDEFARELQEIWKTSSC.

Positions 1-55 (MAVMKIKGAATVAGTWLNEAVSFVVFCILDIVDSFLCLLYKAADYLFEAEWKPCY) are cleaved as a signal peptide. The N-palmitoyl cysteine moiety is linked to residue C56. The AB hydrolase-1 domain maps to 220–326 (VLFIHGFISS…LTLLAPPYYP (107 aa)). H224 is a catalytic residue. Catalysis depends on S297, which acts as the Nucleophile. Residues D446 and H474 each act as charge relay system in the active site.

It localises to the cell membrane. Its subcellular location is the secreted. The protein resides in the cell wall. Functionally, involved in cuticle development and morphogenesis. In Arabidopsis thaliana (Mouse-ear cress), this protein is Probable lysophospholipase BODYGUARD 3.